Consider the following 298-residue polypeptide: Estradiol 17-beta-dehydrogenase 11 (298 aa).

A signal peptide spans 1-21 (MKYLLDLILLLPLLIVFCIES). 40–64 (LITGAGHGIGRLTAYEFAKLNTKLV) contacts NADP(+). A substrate-binding site is contributed by Ser172. The active-site Proton acceptor is Tyr185.

Belongs to the short-chain dehydrogenases/reductases (SDR) family. 17-beta-HSD 3 subfamily.

It localises to the endoplasmic reticulum. The protein localises to the lipid droplet. The enzyme catalyses 17beta-estradiol + NAD(+) = estrone + NADH + H(+). It catalyses the reaction 17beta-estradiol + NADP(+) = estrone + NADPH + H(+). Functionally, can convert androstan-3-alpha,17-beta-diol (3-alpha-diol) to androsterone in vitro, suggesting that it may participate in androgen metabolism during steroidogenesis. May act by metabolizing compounds that stimulate steroid synthesis and/or by generating metabolites that inhibit it. Has no activity toward DHEA (dehydroepiandrosterone), or A-dione (4-androste-3,17-dione), and only a slight activity toward testosterone to A-dione. The sequence is that of Estradiol 17-beta-dehydrogenase 11 (Hsd17b11) from Rattus norvegicus (Rat).